Consider the following 122-residue polypeptide: Large ribosomal subunit protein uL14 (122 aa).

Belongs to the universal ribosomal protein uL14 family. Part of the 50S ribosomal subunit. Forms a cluster with proteins L3 and L19. In the 70S ribosome, L14 and L19 interact and together make contacts with the 16S rRNA in bridges B5 and B8.

Its function is as follows. Binds to 23S rRNA. Forms part of two intersubunit bridges in the 70S ribosome. This is Large ribosomal subunit protein uL14 from Sulfurimonas denitrificans (strain ATCC 33889 / DSM 1251) (Thiomicrospira denitrificans (strain ATCC 33889 / DSM 1251)).